The chain runs to 241 residues: Ribosome-recycling factor, mitochondrial (241 aa).

Belongs to the RRF family.

The protein localises to the mitochondrion. Its function is as follows. Necessary for protein synthesis in mitochondria. Functions as a ribosome recycling factor in mitochondria. This chain is Ribosome-recycling factor, mitochondrial (RRF1), found in Kluyveromyces lactis (strain ATCC 8585 / CBS 2359 / DSM 70799 / NBRC 1267 / NRRL Y-1140 / WM37) (Yeast).